Reading from the N-terminus, the 532-residue chain is MQLHISPSMRSITISSSNEFIDLMKIKVAARHISYRTLFHTILILAFLLPFVFILTAVVTLEGVNKCSSIDCLGRRIGPRLLGRVDDSERLARDFYKILNEVSTQEIPDGLKLPNSFSQLVSDMKNNHYDAKTFALVLRAMMEKFERDMRESKFAELMNKHFAASSIPKGIHCLSLRLTDEYSSNAHARRQLPSPEFLPVLSDNAYHHFILSTDNILAASVVVSSAVQSSSKPEKIVFHIITDKKTYAGMHSWFALNSVAPAIVEVKGVHQFDWLTRENVPVLEAVESHNGVRDYYHGNHVAGANLTETTPRTFASKLQSRSPKYISLLNHLRIYIPELFPNLDKVVFLDDDIVVQGDLTPLWDVDLGGKVNGAVETCRGEDEWVMSKRLRNYFNFSHPLIAKHLDPEECAWAYGMNIFDLQAWRKTNIRETYHSWLRENLKSNLTMWKLGTLPPALIAFKGHVHIIDSSWHMLGLGYQSKTNIENVKKAAVIHYNGQSKPWLEIGFEHLRPFWTKYVNYSNDFIKNCHILE.

Residues 1-40 (MQLHISPSMRSITISSSNEFIDLMKIKVAARHISYRTLFH) are Cytoplasmic-facing. A helical; Signal-anchor for type II membrane protein transmembrane segment spans residues 41 to 61 (TILILAFLLPFVFILTAVVTL). The Lumenal portion of the chain corresponds to 62-532 (EGVNKCSSID…DFIKNCHILE (471 aa)). N-linked (GlcNAc...) asparagine glycans are attached at residues Asn-305, Asn-395, Asn-444, and Asn-519.

This sequence belongs to the glycosyltransferase 8 family. As to expression, expressed in roots, inflorescences, siliques, leaves and stems. Accumulates in pollen grains.

The protein resides in the golgi apparatus membrane. The protein operates within glycan metabolism; pectin biosynthesis. In terms of biological role, may be involved in pectin and/or xylans biosynthesis in cell walls. Together with GAUT13, required for pollen tube growth, possibly through the regulation of pectin biosynthesis and repartition in the pollen tube wall. This Arabidopsis thaliana (Mouse-ear cress) protein is Probable galacturonosyltransferase 14.